The primary structure comprises 120 residues: Neuromedin-B (120 aa).

Residues 1 to 29 (MSAVPLTRMLPLRFLTHLLLLSFIPLYFC) form the signal peptide. The propeptide occupies 30-44 (MEFSEDARNIEKIRR). M54 carries the post-translational modification Methionine amide. A propeptide spanning residues 58 to 120 (SLQDTYNPSE…MDDYIKTTQK (63 aa)) is cleaved from the precursor.

It belongs to the bombesin/neuromedin-B/ranatensin family. As to expression, brain, intestine, and ovaries and early embryos (stages 2 and 10).

The protein localises to the secreted. Its function is as follows. Stimulates smooth muscle contraction. The chain is Neuromedin-B (nmb) from Xenopus laevis (African clawed frog).